The chain runs to 58 residues: Large ribosomal subunit protein uL30 (58 aa).

The protein belongs to the universal ribosomal protein uL30 family. In terms of assembly, part of the 50S ribosomal subunit.

This Erythrobacter litoralis (strain HTCC2594) protein is Large ribosomal subunit protein uL30.